The primary structure comprises 396 residues: MSDSITNPENSEIQTNYDKIVHKFDELKLKEVLLRGIYGYGFVDPSAIQQRAILPIIEGHDVLAQAQSGTGKTGTFSIAALQRIDESIKAPQALILAPTRELALQIQKVVMALALHMDVKVHACIGGTDPREDAEALRAGAQIVVGTPGRVFDMIERRNFKTDHIKMFILDEADEMLSSGFKEQIYKIFTMLPPTTQVVLLSATMPKEVLDVTDKFMNKPVRILVKKDALTLEGIQQYYINVESEEYKYDCLSDLYDSISVTQAVIFCNTRRKVEELTKRLTDDSFTVSAIYSDLPQAQRDTIMKEFRTGSSRILISTDLLARGIDVQQVSLVINYDLPNNKENYIHRIGRGGRFGRKGVAINLVTDRDVGDMRELERFYSTQIEELPANIADLFD.

A Q motif motif is present at residues 22-50; the sequence is HKFDELKLKEVLLRGIYGYGFVDPSAIQQ. Residues 53 to 223 form the Helicase ATP-binding domain; the sequence is ILPIIEGHDV…DKFMNKPVRI (171 aa). 66-73 is a binding site for ATP; it reads AQSGTGKT. Residues 171–174 carry the DEAD box motif; that stretch reads DEAD. Residues 234–395 form the Helicase C-terminal domain; that stretch reads GIQQYYINVE…ELPANIADLF (162 aa).

The protein belongs to the DEAD box helicase family. eIF4A subfamily. Component of the eIF4F complex, which composition varies with external and internal environmental conditions. It is composed of at least eIF4A, eIF4E and eIF4G.

It is found in the cytoplasm. It carries out the reaction ATP + H2O = ADP + phosphate + H(+). Functionally, ATP-dependent RNA helicase which is a subunit of the eIF4F complex involved in cap recognition and is required for mRNA binding to ribosome. In the current model of translation initiation, eIF4A unwinds RNA secondary structures in the 5'-UTR of mRNAs which is necessary to allow efficient binding of the small ribosomal subunit, and subsequent scanning for the initiator codon. This Eremothecium gossypii (strain ATCC 10895 / CBS 109.51 / FGSC 9923 / NRRL Y-1056) (Yeast) protein is ATP-dependent RNA helicase eIF4A (TIF1).